A 77-amino-acid polypeptide reads, in one-letter code: UPF0401 protein UTI89_C4989 (77 aa).

It belongs to the UPF0401 family.

The protein is UPF0401 protein UTI89_C4989 of Escherichia coli (strain UTI89 / UPEC).